The primary structure comprises 325 residues: WUSCHEL-related homeobox 8 (325 aa).

A DNA-binding region (homeobox; WUS-type) is located at residues 51–115 (DPKPRWNPKP…NRKSRAKHKL (65 aa)).

This sequence belongs to the WUS homeobox family. In terms of tissue distribution, expressed only in the egg cell. Not detected in the pollen tube. Expressed in the zygote, the basal cell, and later the suspensor. Expressed in all suspensor cells, except the hypophysis, and in the embryo surrounding region (ESR) endosperm cells. Strongly expressed in the suspensor cells, with a weak expression also detected throughout the developing embryo.

It is found in the nucleus. In terms of biological role, probable transcription factor, which may be involved in embryonic patterning. May be required for basal embryo development after fertilization. Acts partially redundantly with STIP in promoting embryonic cell division and proliferation. Promotes cotyledon boundary formation by maintaining the symmetry in CUC genes expression domains. In Arabidopsis thaliana (Mouse-ear cress), this protein is WUSCHEL-related homeobox 8.